The sequence spans 968 residues: MPFTLGQRWISDTESELGLGTVVAMDARTVTLLFPSTGENRLYARSDSPVTRVMFNPGDTITSHEGWQLHIDEVKEENGLLVYVGTRLDTEETNVTLREVLLDSKLVFSKPQDRLFAGQIDRMDRFALRYRARKFQSEQYRMPYSGLRGQRTNLIPHQLNIAHDVGRRHAPRVLLADEVGLGKTIEAGMILHQQLLSGAAERVLIIVPETLQHQWLVEMLRRFNLRFALFDDERYTEAQHDAYNPFETEQLVICSLDFARRNKQRLEHLCDAEWDLLVVDEAHHLVWSTDAPSREYMAIEQLAERVPGVLLLTATPEQLGMESHFARLRLLDPNRFHDFEQFVEEQKNYRPVADAVAMLLAGNKLSNDELNRLGDLIGEQDIEPLLQAANSDRDDAQAARDELVSMLMDRHGTSRVLFRNTRNGVKGFPKRELHTVKLPLPTQYQTAIKVSGIMGARKSAEDRARDMLYPEQIYQEFEGDTGTWWNFDPRVEWLMGYLTSHRSQKVLVICAKATTALQLEQVLREREGIRAAVFHEGMSIIERDRAAAWFAEEDTGAQVLLCSEIGSEGRNFQFASNLVMFDLPFNPDLLEQRIGRLDRIGQAHDIQIHVPYLEKTAQSVLVRWYHEGLDAFEHTCPTGRAIYDSAYASLINYLAAPEETDGFDDLIKSCREQHEALKAQLEQGRDRLLEIHSNGGEKAQQLAQSIEEQDDDTNLIAFAMNLFDIVGINQDDRGDNLIVLTPSDHMLVPDFPGLPEDGCTITFERDVALSREDAQFITWEHPLIRNGLDLILSGDTGSSTISLLKNKALPVGTLLVELVYVVEAQAPKQLQLNRFLPPTPVRMLLDKNGNNLAAQVEFETFNRQLSAVNRHTGSKLVNAVQQDVHAILQLGETQIEKSARALIDNARREADEKLSGELSRLEALRAVNPNIRDDELAAIDSNRQQVLESLNQAGWRLDALRLIVVTHQ.

Residues 164-334 (DVGRRHAPRV…FARLRLLDPN (171 aa)) form the Helicase ATP-binding domain. 177-184 (DEVGLGKT) lines the ATP pocket. A DEAH box motif is present at residues 280–283 (DEAH). The region spanning 490–685 (RVEWLMGYLT…ALKAQLEQGR (196 aa)) is the Helicase C-terminal domain.

Belongs to the SNF2/RAD54 helicase family. RapA subfamily. Interacts with the RNAP. Has a higher affinity for the core RNAP than for the holoenzyme. Its ATPase activity is stimulated by binding to RNAP.

In terms of biological role, transcription regulator that activates transcription by stimulating RNA polymerase (RNAP) recycling in case of stress conditions such as supercoiled DNA or high salt concentrations. Probably acts by releasing the RNAP, when it is trapped or immobilized on tightly supercoiled DNA. Does not activate transcription on linear DNA. Probably not involved in DNA repair. The protein is RNA polymerase-associated protein RapA of Salmonella schwarzengrund (strain CVM19633).